The following is a 448-amino-acid chain: MRECISVHVGQAGVQMGNTCWELYCLEHGIQPDGQMPSDKTIGGGDDSFTTFFCETGAGKHVPRAIFVDLEPTVIDEVRAGIYRQLFHPEQLITGKEDGANNYARGHYTIGKEIIDQVLDRIRKLADQCTGLQGFLCFHSFGGGTGSGFTSLLMERLSGDYGKKSKLEFSIYPAPQVSTAVVEPYNSILTTHTTLEHSDCAFMVDNEAIYDICRRNLDIERPTYTNLNRLISQIVSSITASLRFDGALNVDLTEFQTNLVPYPRIHFPLATYAPVISAEKAYHEQLSVAEITNSCFEPANQMVKCDPRHGKYMACCLLYRGDVVPKDVNAAIATIKTKRSIQFVDWCPTGFKVGINYQPPTVVAGGDLAKVQRIVCMLSNTTAIAEAWARLDHKFDLMYAKRAFVHWYVGEGMEEGEFSEAREDIAALEKDYEEVGLDSYEDEEEGEE.

Residues 1–4 (MREC) carry the MREC motif motif. GTP is bound at residue Gln11. Residue Lys40 is modified to N6-acetyllysine. The GTP site is built by Glu71, Ser140, Gly144, Thr145, Thr179, Asn206, and Asn228. Residue Glu71 participates in Mg(2+) binding. Glu254 is an active-site residue.

It belongs to the tubulin family. As to quaternary structure, dimer of alpha and beta chains. A typical microtubule is a hollow water-filled tube with an outer diameter of 25 nm and an inner diameter of 15 nM. Alpha-beta heterodimers associate head-to-tail to form protofilaments running lengthwise along the microtubule wall with the beta-tubulin subunit facing the microtubule plus end conferring a structural polarity. Microtubules usually have 13 protofilaments but different protofilament numbers can be found in some organisms and specialized cells. It depends on Mg(2+) as a cofactor. Post-translationally, some glutamate residues at the C-terminus are polyglycylated, resulting in polyglycine chains on the gamma-carboxyl group. Glycylation is mainly limited to tubulin incorporated into axonemes (cilia and flagella) whereas glutamylation is prevalent in neuronal cells, centrioles, axonemes, and the mitotic spindle. Both modifications can coexist on the same protein on adjacent residues, and lowering polyglycylation levels increases polyglutamylation, and reciprocally. The precise function of polyglycylation is still unclear. In terms of processing, some glutamate residues at the C-terminus are polyglutamylated, resulting in polyglutamate chains on the gamma-carboxyl group. Polyglutamylation plays a key role in microtubule severing by spastin (SPAST). SPAST preferentially recognizes and acts on microtubules decorated with short polyglutamate tails: severing activity by SPAST increases as the number of glutamates per tubulin rises from one to eight, but decreases beyond this glutamylation threshold. Acetylation of alpha chains at Lys-40 is located inside the microtubule lumen. This modification has been correlated with increased microtubule stability, intracellular transport and ciliary assembly.

The protein localises to the cytoplasm. It is found in the cytoskeleton. It carries out the reaction GTP + H2O = GDP + phosphate + H(+). Its function is as follows. Tubulin is the major constituent of microtubules, a cylinder consisting of laterally associated linear protofilaments composed of alpha- and beta-tubulin heterodimers. Microtubules grow by the addition of GTP-tubulin dimers to the microtubule end, where a stabilizing cap forms. Below the cap, tubulin dimers are in GDP-bound state, owing to GTPase activity of alpha-tubulin. In Gallus gallus (Chicken), this protein is Tubulin alpha-5 chain.